The chain runs to 215 residues: Leucyl/phenylalanyl-tRNA--protein transferase (215 aa).

The protein belongs to the L/F-transferase family.

The protein localises to the cytoplasm. It catalyses the reaction N-terminal L-lysyl-[protein] + L-leucyl-tRNA(Leu) = N-terminal L-leucyl-L-lysyl-[protein] + tRNA(Leu) + H(+). The enzyme catalyses N-terminal L-arginyl-[protein] + L-leucyl-tRNA(Leu) = N-terminal L-leucyl-L-arginyl-[protein] + tRNA(Leu) + H(+). It carries out the reaction L-phenylalanyl-tRNA(Phe) + an N-terminal L-alpha-aminoacyl-[protein] = an N-terminal L-phenylalanyl-L-alpha-aminoacyl-[protein] + tRNA(Phe). Its function is as follows. Functions in the N-end rule pathway of protein degradation where it conjugates Leu, Phe and, less efficiently, Met from aminoacyl-tRNAs to the N-termini of proteins containing an N-terminal arginine or lysine. The polypeptide is Leucyl/phenylalanyl-tRNA--protein transferase (Campylobacter jejuni subsp. jejuni serotype O:6 (strain 81116 / NCTC 11828)).